Reading from the N-terminus, the 346-residue chain is Growth hormone-inducible transmembrane protein (346 aa).

Residues 1–45 (MLAARLVCLRTLPSRVFQPTFITKASPLVKNSITKNQWLVTPSRE) constitute a mitochondrion transit peptide. Topologically, residues 46–83 (YATKTRIRTHRGKTGQELKEAALEPSMEKIFKIDQMGR) are mitochondrial matrix. Residues 84–104 (WFVAGGAAVGLGALCYYGLGM) form a helical membrane-spanning segment. At 105 to 126 (SNEIGAIEKAVIWPQYVKDRIH) the chain is on the mitochondrial intermembrane side. A helical transmembrane segment spans residues 127 to 147 (STYMYLAGSIGLTALSALAVA). Residues 148 to 160 (RTPALMNFMMTGS) are Mitochondrial matrix-facing. Residues 161–181 (WVTIGATFAAMIGAGMLVHSI) form a helical membrane-spanning segment. Over 182 to 191 (SYEQSPGPKH) the chain is Mitochondrial intermembrane. Residues 192-212 (LAWMLHSGVMGAVVAPLTILG) form a helical membrane-spanning segment. Residues 213 to 214 (GP) are Mitochondrial matrix-facing. Residues 215–235 (LLLRAAWYTAGIVGGLSTVAM) form a helical membrane-spanning segment. At 236-245 (CAPSEKFLNM) the chain is on the mitochondrial intermembrane side. A helical membrane pass occupies residues 246–266 (GAPLGVGLGLVFASSLGSMFL). Residues 267 to 272 (PPTSVA) are Mitochondrial matrix-facing. Residues 273 to 293 (GATLYSVAMYGGLVLFSMFLL) form a helical membrane-spanning segment. Residues 294-346 (YDTQKVIKRAEITPMYGAQKYDPINSMLTIYMDTLNIFMRVATMLATGSNRKK) lie on the Mitochondrial intermembrane side of the membrane.

Belongs to the BI1 family. As to quaternary structure, interacts with LETM1 and AFG3L2. In terms of processing, undergoes AFG3L2-mediated proteolytic degradation, upon hyperpolarization of mitochondria.

The protein resides in the mitochondrion inner membrane. The catalysed reaction is Ca(2+)(in) + 2 H(+)(out) = Ca(2+)(out) + 2 H(+)(in). It catalyses the reaction K(+)(in) + H(+)(out) = K(+)(out) + H(+)(in). Plays an important role in maintenance of mitochondrial morphology and in mediating either calcium or potassium/proton antiport. Mediates proton-dependent calcium efflux from mitochondrion. Also functions as an electroneutral mitochondrial proton/potassium exchanger. Required for the mitochondrial tubular network and cristae organization. Involved in apoptotic release of cytochrome c. Inhibits AFG3L2 proteolytic activity, stimulating respiration and stabilizing respiratory enzymes in actively respiring mitochondria. However, when mitochondria become hyperpolarized, GHITM loses its inhibitory activity toward AFG3L2 and the now active AFG3L2 turns first on GHITM and, if hyperpolarization persists, on other proteins of the mitochondria, leading to a broad remodeling of the mitochondrial proteome. This is Growth hormone-inducible transmembrane protein (Ghitm) from Mus musculus (Mouse).